The following is an 802-amino-acid chain: ATP-dependent zinc metalloprotease FTSH 3, mitochondrial (802 aa).

The N-terminal 21 residues, 1-21, are a transit peptide targeting the mitochondrion; the sequence is MSLSSLSRALARSARSSRQRQ. Positions 1–23 are enriched in low complexity; that stretch reads MSLSSLSRALARSARSSRQRQGS. 2 disordered regions span residues 1 to 33 and 85 to 120; these read MSLS…GLRA and DKSK…SGDQ. The span at 85 to 113 shows a compositional bias: basic and acidic residues; sequence DKSKKNHGKHSEEENKGKGDESDKSDSKK. A helical transmembrane segment spans residues 133 to 153; the sequence is MIAPLFLFGLLLLSASASSSE. Position 360–367 (360–367) interacts with ATP; that stretch reads GPPGTGKT. H585 provides a ligand contact to Zn(2+). E586 is an active-site residue. The Zn(2+) site is built by H589 and D661. Residues 773–802 form a disordered region; it reads KQGFQDEDSNRNAELSNADGASSLGEAVAS.

The protein in the N-terminal section; belongs to the AAA ATPase family. In the C-terminal section; belongs to the peptidase M41 family. The cofactor is Zn(2+).

Its subcellular location is the mitochondrion inner membrane. Functionally, probable ATP-dependent zinc metallopeptidase. This Oryza sativa subsp. japonica (Rice) protein is ATP-dependent zinc metalloprotease FTSH 3, mitochondrial (FTSH3).